An 87-amino-acid polypeptide reads, in one-letter code: Small ribosomal subunit protein uS17 (87 aa).

It belongs to the universal ribosomal protein uS17 family. Part of the 30S ribosomal subunit.

Its function is as follows. One of the primary rRNA binding proteins, it binds specifically to the 5'-end of 16S ribosomal RNA. This is Small ribosomal subunit protein uS17 from Alcanivorax borkumensis (strain ATCC 700651 / DSM 11573 / NCIMB 13689 / SK2).